Reading from the N-terminus, the 407-residue chain is Argininosuccinate synthase (407 aa).

Residues 12-20 and alanine 39 contribute to the ATP site; that span reads AYSGGLDTS. L-citrulline-binding residues include tyrosine 92 and serine 97. Residue glycine 122 participates in ATP binding. 3 residues coordinate L-aspartate: threonine 124, asparagine 128, and aspartate 129. Asparagine 128 is an L-citrulline binding site. Arginine 132, serine 183, serine 192, glutamate 268, and tyrosine 280 together coordinate L-citrulline.

It belongs to the argininosuccinate synthase family. Type 1 subfamily. As to quaternary structure, homotetramer.

Its subcellular location is the cytoplasm. The catalysed reaction is L-citrulline + L-aspartate + ATP = 2-(N(omega)-L-arginino)succinate + AMP + diphosphate + H(+). The protein operates within amino-acid biosynthesis; L-arginine biosynthesis; L-arginine from L-ornithine and carbamoyl phosphate: step 2/3. The chain is Argininosuccinate synthase from Caulobacter sp. (strain K31).